Consider the following 477-residue polypeptide: Protein DETOXIFICATION 5 (477 aa).

12 helical membrane-spanning segments follow: residues 38 to 58, 72 to 92, 113 to 133, 146 to 166, 187 to 207, 211 to 231, 263 to 283, 292 to 312, 333 to 353, 376 to 396, 411 to 431, and 436 to 456; these read AAPM…SVMV, LATA…VGAL, FSAI…WFYM, ISKV…AQAV, AITT…AFGL, GAAL…ALYV, AAMT…SGLL, VLSI…GIGA, AVFA…TLLF, LSSL…LDGV, VVAY…WGHM, and LWIG…IVTA.

The protein belongs to the multi antimicrobial extrusion (MATE) (TC 2.A.66.1) family.

The protein localises to the membrane. The chain is Protein DETOXIFICATION 5 from Arabidopsis thaliana (Mouse-ear cress).